Reading from the N-terminus, the 116-residue chain is T-cell leukemia/lymphoma protein 1A (116 aa).

Belongs to the TCL1 family. As to quaternary structure, homodimer. Interacts with AKT1, AKT2 and AKT3 (via PH domain). Interacts with PNPT1; the interaction has no effect on PNPT1 exonuclease activity.

The protein localises to the cytoplasm. It localises to the nucleus. Its subcellular location is the microsome. The protein resides in the endoplasmic reticulum. Its function is as follows. Enhances the phosphorylation and activation of AKT1 and AKT2. Enhances cell proliferation, stabilizes mitochondrial membrane potential and promotes cell survival. The sequence is that of T-cell leukemia/lymphoma protein 1A (Tcl1a) from Mus musculus (Mouse).